The primary structure comprises 3942 residues: Protein bassoon (3942 aa).

The interval 1–158 is disordered; sequence MGNEASLEGG…PTSPYSVPQI (158 aa). A lipid anchor (N-myristoyl glycine) is attached at glycine 2. Residues 9 to 29 are compositionally biased toward gly residues; that stretch reads GGAGEGPLPPGGSGLGPGPGA. Residues 31 to 52 show a composition bias toward low complexity; sequence KPPSALAGGGQLPVAGAARAAG. Residues 53–71 show a composition bias toward pro residues; sequence PPTPGLGPVPGPGPGPGPG. Residues 62–71 are 5 X 2 AA tandem repeats of P-G; it reads PGPGPGPGPG. Composition is skewed to polar residues over residues 85–98 and 127–154; these read SQRT…QASA and QVDS…SPYS. Serine 142 carries the phosphoserine modification. Arginine 145 carries the omega-N-methylarginine modification. C4-type zinc fingers lie at residues 167–190 and 195–217; these read CPIC…CTQC and CNQC…CLNC. Disordered stretches follow at residues 228–341 and 362–457; these read TTAP…EQTQ and LMSV…KTMP. Polar residues predominate over residues 230–240; that stretch reads APRSKSQQQLH. A phosphoserine mark is found at serine 241 and serine 245. Over residues 362–379 the composition is skewed to polar residues; that stretch reads LMSVQPEADTQGQPSPSK. The span at 395–407 shows a compositional bias: pro residues; sequence PRPPGSGPGPGPT. 2 C4-type zinc fingers span residues 464–487 and 492–514; these read CPLC…CTAC and CNLC…CLNC. Disordered regions lie at residues 525-937, 950-1258, 1309-1553, and 1573-1625; these read GEPA…LQGG, GSYG…VAES, MDPM…WQQS, and RMVH…PSAG. The segment covering 528 to 541 has biased composition (pro residues); that stretch reads APLPLPTPQQPPAG. 5 tandem repeats follow at residues 570–576, 577–583, 584–590, 591–597, and 598–604. The 5 X 7 AA tandem repeats of K-A-S-P-Q-[AT]-[AT] stretch occupies residues 570–604; that stretch reads KASPQATKASPQATKASPQATKASPQTTKASPQAK. Over residues 573-600 the composition is skewed to polar residues; it reads PQATKASPQATKASPQATKASPQTTKAS. Pro residues predominate over residues 632 to 645; that stretch reads VPKPPPETTVPPGT. A compositionally biased stretch (polar residues) spans 684–693; sequence QDLSRSPQSL. Over residues 694 to 708 the composition is skewed to low complexity; the sequence is SDTGYSSDGVSSSQS. The segment covering 709–718 has biased composition (polar residues); the sequence is EITGVVQQEV. Composition is skewed to acidic residues over residues 787–802 and 865–876; these read FDSD…EDDS and SAEEDNLEEDDT. The residue at position 881 (arginine 881) is an Omega-N-methylarginine. Residues 895–905 show a composition bias toward basic and acidic residues; it reads PRPESSQEPKR. Serine 980 bears the Phosphoserine mark. The segment covering 994–1011 has biased composition (low complexity); it reads PASTPSYTSGTSPTSLSS. Residues 1049-1062 are compositionally biased toward acidic residues; the sequence is DSSEEEELREEEEL. Residues serine 1050 and serine 1051 each carry the phosphoserine modification. Residues 1063–1076 show a composition bias toward basic and acidic residues; that stretch reads LREQEKMREVEQQR. Residue serine 1100 is modified to Phosphoserine. Threonine 1102 carries the post-translational modification Phosphothreonine. Serine 1108 and serine 1114 each carry phosphoserine. Basic and acidic residues predominate over residues 1117–1132; it reads EELRQAAEMEELHRSS. 2 stretches are compositionally biased toward low complexity: residues 1133–1143 and 1173–1190; these read CSEYSPSPSLD and SPTE…SGRP. The span at 1192 to 1207 shows a compositional bias: basic and acidic residues; it reads KSAEEAYEDMMRKAEM. The segment covering 1209 to 1219 has biased composition (low complexity); it reads QRQQGQVAGAR. Residues 1226–1240 are compositionally biased toward polar residues; that stretch reads SQPTGPRSQGSFEYQ. At serine 1236 the chain carries Phosphoserine. The span at 1333–1343 shows a compositional bias: low complexity; sequence SFSTSTSSDSS. Threonine 1354 carries O-linked (GlcNAc) threonine glycosylation. The segment covering 1357–1366 has biased composition (basic and acidic residues); it reads FAKEPQDPLK. Positions 1370–1438 are enriched in polar residues; it reads SPVSSTLTSK…TTANYGSQTE (69 aa). O-linked (GlcNAc) threonine glycosylation is present at threonine 1395. Phosphoserine occurs at positions 1482, 1491, and 1493. Low complexity predominate over residues 1488-1498; the sequence is STPSESPTFSP. 2 stretches are compositionally biased toward polar residues: residues 1508–1522 and 1573–1609; these read EFST…SSDI and RMVH…SQMP. The O-linked (GlcNAc) serine glycan is linked to serine 1707. Arginine 1792 and arginine 1796 each carry omega-N-methylarginine. Residue arginine 1806 is modified to Asymmetric dimethylarginine; alternate. At arginine 1806 the chain carries Omega-N-methylarginine; alternate. Arginine 1818 bears the Omega-N-methylarginine mark. Disordered stretches follow at residues 1831–1865 and 1926–1977; these read GVGL…TRKP and PSAP…QRPY. Residues 1844–1856 are compositionally biased toward basic and acidic residues; the sequence is AEPHRATPAELRS. An O-linked (GlcNAc) threonine glycan is attached at threonine 1934. A phosphoserine mark is found at serine 1990 and serine 2046. Omega-N-methylarginine is present on residues arginine 2051 and arginine 2081. Arginine 2255, arginine 2265, and arginine 2270 each carry asymmetric dimethylarginine. An O-linked (GlcNAc) threonine glycan is attached at threonine 2318. Disordered stretches follow at residues 2327–2378, 2476–2504, and 2524–2663; these read PVAP…KQQE, EQKQ…TELA, and TEGP…STTA. The segment covering 2329 to 2342 has biased composition (pro residues); sequence APAPGPAPAPPPGQ. Positions 2361-2378 are enriched in basic and acidic residues; it reads ASEKEEASQEDRQRKQQE. Coiled coils occupy residues 2366–2422 and 2453–2483; these read EASQ…LVQR and LAQQ…RQKA. A glycan (O-linked (GlcNAc) threonine) is linked at threonine 2524. Residues 2541 to 2551 are compositionally biased toward polar residues; it reads SSASDMSLQTE. Serine 2578 is subject to Phosphoserine. Phosphothreonine occurs at positions 2595 and 2622. A compositionally biased stretch (basic and acidic residues) spans 2643–2655; the sequence is RHSDSGSDSKHDA. Residue threonine 2700 is glycosylated (O-linked (GlcNAc) threonine). Residues 2730–3278 are interaction with DAO; that stretch reads EPDGQAQGVA…GGVSGRPGKD (549 aa). Residues serine 2811, serine 2860, and serine 2866 each carry the phosphoserine modification. The disordered stretch occupies residues 2854 to 2874; it reads TLQRSLSDPKPLSPTAEESAK. The O-linked (GlcNAc) threonine glycan is linked to threonine 2945. Residue serine 3022 is modified to Phosphoserine. 3 disordered regions span residues 3051–3409, 3431–3560, and 3581–3917; these read PATP…LTSR, YYGV…PRAH, and EAYH…KILP. Over residues 3073 to 3083 the composition is skewed to polar residues; it reads TAGSSGPTQNG. Residues 3089 to 3114 show a composition bias toward low complexity; it reads APTYTGPSTYPAPTYPPGTGYPAEPG. Basic and acidic residues predominate over residues 3202-3211; that stretch reads KAPEHPRGSD. Over residues 3212–3237 the composition is skewed to polar residues; that stretch reads RSSVSQSPAPTYPSDSHYTSLEQNVP. Serine 3301 is modified (phosphoserine). Composition is skewed to basic and acidic residues over residues 3330-3342 and 3372-3391; these read GDSD…RADK and QGME…KDVE. Serine 3382 carries the post-translational modification Phosphoserine. The segment covering 3447–3461 has biased composition (low complexity); sequence YGSSSRSRMASAYSG. A compositionally biased stretch (basic and acidic residues) spans 3464–3487; it reads LSSHDYSSRGKGYERERDTAERLQ. Arginine 3502 carries the omega-N-methylarginine modification. Residues 3520 to 3534 show a composition bias toward low complexity; that stretch reads PLGRPRPAGGALPPG. Basic and acidic residues-rich tracts occupy residues 3549 to 3560 and 3592 to 3602; these read VQEHVKDGPRAH and WFDKPRDARSD. Residues 3652-3665 show a composition bias toward basic residues; sequence EHRHHSDHGRHSGR. The segment covering 3666-3690 has biased composition (basic and acidic residues); sequence HAGEEPGRRAAKPHARDMGRHEARP. A compositionally biased stretch (low complexity) spans 3750–3820; it reads TQAQPQMQGR…QARLQPQSQP (71 aa). Arginine 3823 carries the post-translational modification Omega-N-methylarginine. Pro residues predominate over residues 3835-3851; sequence KPQPGPTTAPGPQPAGP. The span at 3856–3891 shows a compositional bias: low complexity; that stretch reads QASSSKPPAAKAPQQGRAPQAQTTPGPGPAGAKPGA.

As to quaternary structure, interacts with PCLO, ERC2/CAST1, RIMS1 and UNC13A. Interacts with TPRG1L. Interacts with DYNLL1 and DYNLL2; these interactions potentially link PTVs to dynein and myosin V motor complexes. Interacts with ATG5; this interaction is important for the regulation of presynaptic autophagy. Interacts (via C-terminus) with TRIO (via N-terminus). Interacts with CTBP1. Interacts with SIAH1; this interaction negatively regulates SIAH1 E3 ligase activity. Interacts (via coiled region) with DAO; the interaction is direct. Post-translationally, myristoylated. The N-terminal myristoylation is not sufficient for presynaptic localization. As to expression, expressed in brain and retina.

It is found in the cytoplasm. The protein localises to the presynaptic active zone. It localises to the cytoskeleton. The protein resides in the cytoplasmic vesicle. Its subcellular location is the secretory vesicle. It is found in the synaptic vesicle membrane. Functionally, scaffold protein of the presynaptic cytomatrix at the active zone (CAZ) which is the place in the synapse where neurotransmitter is released. After synthesis, participates in the formation of Golgi-derived membranous organelles termed Piccolo-Bassoon transport vesicles (PTVs) that are transported along axons to sites of nascent synaptic contacts. At the presynaptic active zone, regulates the spatial organization of synaptic vesicle cluster, the protein complexes that execute membrane fusion and compensatory endocytosis. Also functions in processes other than assembly such as the regulation of specific presynaptic protein ubiquitination by interacting with SIAH1 or the regulation of presynaptic autophagy by associating with ATG5. Also mediates synapse to nucleus communication leading to reconfiguration of gene expression by associating with the transcriptional corepressor CTBP1 and by subsequently reducing the size of its pool available for nuclear import. Inhibits the activity of the proportion of DAO enzyme that localizes to the presynaptic active zone, which may modulate synaptic transmission. This chain is Protein bassoon, found in Mus musculus (Mouse).